Consider the following 68-residue polypeptide: Antimicrobial peptide UyCT5 (68 aa).

A signal peptide spans 1–23 (MKNQFAILLLAVVFLQLISQSDA). Leu-36 is modified (leucine amide). A propeptide spanning residues 40-68 (GLKNADRLDELFDGDISDADLDFLRELMR) is cleaved from the precursor.

This sequence belongs to the non-disulfide-bridged peptide (NDBP) superfamily. Short antimicrobial peptide (group 4) family. As to expression, expressed by the venom gland.

It localises to the secreted. It is found in the target cell membrane. Its function is as follows. Antimicrobial peptide that inhibits the growth of Gram-positive (S.aureus, MIC=1 uM) and Gram-negative bacteria (E.coli, MIC=15 uM and P.aeruginosa, MIC=2 uM). It also shows 37% of hemolysis when 15 uM are tested (93% at 50 uM). The polypeptide is Antimicrobial peptide UyCT5 (Urodacus yaschenkoi (Inland robust scorpion)).